The following is a 324-amino-acid chain: MSILHNIVSKKELKRRMFFETEPRLTLSFYKYFFIKNTQEYRDRLYKNFYKYNVLGRIYVASEGINAQISVPKKYYSILKKFLYNFDIELNNLRINKSLDNEKSFWVLCVKIKKKIVQDGIKEHFFNPNNVGIYIQSEQVNSMLNDKKTIFIDMRNSYEYAIGHFENAIEIKSITFREQLKKVIQLMAYAKNKKIVMYCTGGIRCEKATSWMLFNGFKHVYHLEGGIIGYVHDARKNGLPVLFKGKSFVFDNRMSEKISDEVISYCKQCGKSSDVYINCKYSSCHLLFIQCENCSVKFHSCCSLECMKKYNFYMLNNDLKKISY.

The region spanning 145–239 is the Rhodanese domain; sequence NDKKTIFIDM…YVHDARKNGL (95 aa). Cysteine 199 functions as the Cysteine persulfide intermediate in the catalytic mechanism.

Belongs to the TrhO family.

The catalysed reaction is uridine(34) in tRNA + AH2 + O2 = 5-hydroxyuridine(34) in tRNA + A + H2O. Its function is as follows. Catalyzes oxygen-dependent 5-hydroxyuridine (ho5U) modification at position 34 in tRNAs. This chain is tRNA uridine(34) hydroxylase, found in Buchnera aphidicola subsp. Acyrthosiphon pisum (strain Tuc7).